The chain runs to 278 residues: Large ribosomal subunit protein uL2 (278 aa).

Disordered regions lie at residues 28–58 (TPEK…GGGH) and 223–278 (GVVM…KNKR). Residues 43 to 53 (RNNQGRITTRH) are compositionally biased toward polar residues. The segment covering 268–278 (IRRRKTGKNKR) has biased composition (basic residues).

Belongs to the universal ribosomal protein uL2 family. As to quaternary structure, part of the 50S ribosomal subunit. Forms a bridge to the 30S subunit in the 70S ribosome.

One of the primary rRNA binding proteins. Required for association of the 30S and 50S subunits to form the 70S ribosome, for tRNA binding and peptide bond formation. It has been suggested to have peptidyltransferase activity; this is somewhat controversial. Makes several contacts with the 16S rRNA in the 70S ribosome. The protein is Large ribosomal subunit protein uL2 of Nocardioides sp. (strain ATCC BAA-499 / JS614).